Reading from the N-terminus, the 428-residue chain is Serine--tRNA ligase (428 aa).

Thr235 to Glu237 contacts L-serine. Arg266–Glu268 contributes to the ATP binding site. Glu289 is a binding site for L-serine. Position 353–356 (Glu353–Ser356) interacts with ATP. Residue Ser389 participates in L-serine binding.

It belongs to the class-II aminoacyl-tRNA synthetase family. Type-1 seryl-tRNA synthetase subfamily. In terms of assembly, homodimer. The tRNA molecule binds across the dimer.

It localises to the cytoplasm. It catalyses the reaction tRNA(Ser) + L-serine + ATP = L-seryl-tRNA(Ser) + AMP + diphosphate + H(+). It carries out the reaction tRNA(Sec) + L-serine + ATP = L-seryl-tRNA(Sec) + AMP + diphosphate + H(+). It functions in the pathway aminoacyl-tRNA biosynthesis; selenocysteinyl-tRNA(Sec) biosynthesis; L-seryl-tRNA(Sec) from L-serine and tRNA(Sec): step 1/1. Functionally, catalyzes the attachment of serine to tRNA(Ser). Is also able to aminoacylate tRNA(Sec) with serine, to form the misacylated tRNA L-seryl-tRNA(Sec), which will be further converted into selenocysteinyl-tRNA(Sec). The sequence is that of Serine--tRNA ligase from Shewanella oneidensis (strain ATCC 700550 / JCM 31522 / CIP 106686 / LMG 19005 / NCIMB 14063 / MR-1).